The sequence spans 316 residues: Transaldolase (316 aa).

The Schiff-base intermediate with substrate role is filled by Lys-132.

Belongs to the transaldolase family. Type 1 subfamily. As to quaternary structure, homodimer.

It is found in the cytoplasm. It catalyses the reaction D-sedoheptulose 7-phosphate + D-glyceraldehyde 3-phosphate = D-erythrose 4-phosphate + beta-D-fructose 6-phosphate. The protein operates within carbohydrate degradation; pentose phosphate pathway; D-glyceraldehyde 3-phosphate and beta-D-fructose 6-phosphate from D-ribose 5-phosphate and D-xylulose 5-phosphate (non-oxidative stage): step 2/3. Transaldolase is important for the balance of metabolites in the pentose-phosphate pathway. In Aeromonas salmonicida (strain A449), this protein is Transaldolase.